The chain runs to 458 residues: UPF0210 protein Maeo_1412 (458 aa).

Belongs to the UPF0210 family.

The protein is UPF0210 protein Maeo_1412 of Methanococcus aeolicus (strain ATCC BAA-1280 / DSM 17508 / OCM 812 / Nankai-3).